The following is a 269-amino-acid chain: Formamidopyrimidine-DNA glycosylase (269 aa).

The Schiff-base intermediate with DNA role is filled by Pro-2. The active-site Proton donor is Glu-3. The active-site Proton donor; for beta-elimination activity is Lys-57. His-90, Arg-109, and Arg-150 together coordinate DNA. Residues 235-269 form an FPG-type zinc finger; sequence NVYGRKGEPCEACGKAIESKVIGQRNTFFCTRCQR. Arg-259 acts as the Proton donor; for delta-elimination activity in catalysis.

This sequence belongs to the FPG family. Monomer. The cofactor is Zn(2+).

The enzyme catalyses Hydrolysis of DNA containing ring-opened 7-methylguanine residues, releasing 2,6-diamino-4-hydroxy-5-(N-methyl)formamidopyrimidine.. It catalyses the reaction 2'-deoxyribonucleotide-(2'-deoxyribose 5'-phosphate)-2'-deoxyribonucleotide-DNA = a 3'-end 2'-deoxyribonucleotide-(2,3-dehydro-2,3-deoxyribose 5'-phosphate)-DNA + a 5'-end 5'-phospho-2'-deoxyribonucleoside-DNA + H(+). Functionally, involved in base excision repair of DNA damaged by oxidation or by mutagenic agents. Acts as a DNA glycosylase that recognizes and removes damaged bases. Has a preference for oxidized purines, such as 7,8-dihydro-8-oxoguanine (8-oxoG). Has AP (apurinic/apyrimidinic) lyase activity and introduces nicks in the DNA strand. Cleaves the DNA backbone by beta-delta elimination to generate a single-strand break at the site of the removed base with both 3'- and 5'-phosphates. This is Formamidopyrimidine-DNA glycosylase from Alteromonas mediterranea (strain DSM 17117 / CIP 110805 / LMG 28347 / Deep ecotype).